Consider the following 253-residue polypeptide: Eukaryotic initiation factor 4A-6 (253 aa).

The region spanning 1–82 (HVVVGTPGRV…RKFMNKPVRI (82 aa)) is the Helicase ATP-binding domain. The short motif at 30-33 (DEAD) is the DEAD box element. The Helicase C-terminal domain occupies 93–253 (GIKQFYVNVD…EELPANVADL (161 aa)).

The protein belongs to the DEAD box helicase family. eIF4A subfamily. As to quaternary structure, eIF4F is a multi-subunit complex, the composition of which varies with external and internal environmental conditions. It is composed of at least EIF4A, EIF4E and EIF4G.

The enzyme catalyses ATP + H2O = ADP + phosphate + H(+). Its function is as follows. ATP-dependent RNA helicase which is a subunit of the eIF4F complex involved in cap recognition and is required for mRNA binding to ribosome. In the current model of translation initiation, eIF4A unwinds RNA secondary structures in the 5'-UTR of mRNAs which is necessary to allow efficient binding of the small ribosomal subunit, and subsequent scanning for the initiator codon. This chain is Eukaryotic initiation factor 4A-6, found in Nicotiana tabacum (Common tobacco).